The following is a 463-amino-acid chain: FAD-dependent monooxygenase ausM (463 aa).

FAD is bound by residues Glu-40, Gly-54, and Arg-113. The active site involves Tyr-217. FAD-binding residues include Asp-309 and Ala-322. A helical membrane pass occupies residues 443-463 (VPWLVISLPVLASVLCYLMFA).

Belongs to the paxM FAD-dependent monooxygenase family. The cofactor is FAD.

The protein resides in the membrane. It functions in the pathway secondary metabolite biosynthesis; terpenoid biosynthesis. FAD-dependent monooxygenase; part of the gene cluster that mediates the biosynthesis of calidodehydroaustin, a fungal meroterpenoid. The first step of the pathway is the synthesis of 3,5-dimethylorsellinic acid by the polyketide synthase ausA. 3,5-dimethylorsellinic acid is then prenylated by the polyprenyl transferase ausN. Further epoxidation by the FAD-dependent monooxygenase ausM and cyclization by the probable terpene cyclase ausL lead to the formation of protoaustinoid A. Protoaustinoid A is then oxidized to spiro-lactone preaustinoid A3 by the combined action of the FAD-binding monooxygenases ausB and ausC, and the dioxygenase ausE. Acid-catalyzed keto-rearrangement and ring contraction of the tetraketide portion of preaustinoid A3 by ausJ lead to the formation of preaustinoid A4. The aldo-keto reductase ausK, with the help of ausH, is involved in the next step by transforming preaustinoid A4 into isoaustinone which is in turn hydroxylated by the P450 monooxygenase ausI to form austinolide. The cytochrome P450 monooxygenase ausG modifies austinolide to austinol. Austinol is further acetylated to austin by the O-acetyltransferase ausP, which spontaneously changes to dehydroaustin. The cytochrome P450 monooxygenase ausR then converts dehydroaustin is into 7-dehydrodehydroaustin. The hydroxylation catalyzed by ausR permits the O-acetyltransferase ausQ to add an additional acetyl group to the molecule, leading to the formation of acetoxydehydroaustin. The short chain dehydrogenase ausT catalyzes the reduction of the double bond present between carbon atoms 1 and 2 to convert 7-dehydrodehydroaustin into 1,2-dihydro-7-hydroxydehydroaustin. AusQ catalyzes not only an acetylation reaction but also the addition of the PKS ausV diketide product to 1,2-dihydro-7-hydroxydehydroaustin, forming precalidodehydroaustin. Finally, the iron/alpha-ketoglutarate-dependent dioxygenase converts precalidodehydroaustin into calidodehydroaustin. This chain is FAD-dependent monooxygenase ausM, found in Aspergillus calidoustus.